The sequence spans 386 residues: Glucose-1-phosphate adenylyltransferase (386 aa).

Alpha-D-glucose 1-phosphate is bound by residues Tyr99, Gly164, 179-180 (EK), and Ser190.

This sequence belongs to the bacterial/plant glucose-1-phosphate adenylyltransferase family. As to quaternary structure, homotetramer.

The catalysed reaction is alpha-D-glucose 1-phosphate + ATP + H(+) = ADP-alpha-D-glucose + diphosphate. The protein operates within glycan biosynthesis; glycogen biosynthesis. Its function is as follows. Involved in the biosynthesis of ADP-glucose, a building block required for the elongation reactions to produce glycogen. Catalyzes the reaction between ATP and alpha-D-glucose 1-phosphate (G1P) to produce pyrophosphate and ADP-Glc. This is Glucose-1-phosphate adenylyltransferase from Clostridioides difficile (strain 630) (Peptoclostridium difficile).